A 972-amino-acid chain; its full sequence is MNNVKSGGRPVAIVAERYVVEKEIGRGSFAVVYKGHLADSSAGNVAIKAVSRSKLRNKKLLENLEIEIAILKKIKHPHIVGLLECERTGTDFYLMMEYCALGDLTFFIKKRRSLMDKHPLVRTLFEKYPPPSEHHNGLNRVLVVNYLQQLSSALKFLRSKNLVHRDIKPQNLLLSTPLVDYNDPAEFHARGFVGIYNLPILKIADFGFARFLPNTSLAETLCGSPLYMAPEILNYQKYNAKADLWSVGTVLYEMCCGKPPFKASNHLELFQKIKKANDVIQFPKHAALESAMVDLICGLLTFEPAKRMGFTEFFSNGLVNEDLSPYEVESEPDLETKSKNVAESNMFISEYLPTAERNKRASPIRLGDSCTLRGPCESPQGADPYPQDNTQSDQHEHLHADYSFQVEMGQDGQQADGEEKRKLYNNQEERSNEERQFGQVSNGRNQEDQLLLHQGRGQIPCEQNRQALQSHSHVAAKQIPDKDSKSSVSCQKHAASAPTKNDHRTTRLKEKTKCSYSDLLLEKEYVVVEKKSVEVNALADEFAQAGSGAPAIRLPDQHHNDASQALQMARHSSTSVSAANTAKQTLLRRNSRTLSSSGASTSRRPSLVDRRLSITSLGATNALSKALGMASLRLFGNSHQQSSNGSSTFKQNPNVTSLLSPQTFQDMTENAVLSADHQWDNSRQADVLHDDSIMKALENLTAKVYAIYSFAEVKFSQIIPLPPSSTQDPYTHKRMSNGSCAIDDEEDDIEHSPGAETYRKNSSGANANTGNYNFSLDTIHEMNLNDLPPNDLYILCTEAIVLYMKSLSLLAYAMHLTSKWWHESADKICPLKLNLLVQWIRERFNECLEKAEFLRMKTQSIQLHNGNQLSASTMVSEPVFVEKLIYDRALDISKTAAKMEMQGEYLEGCEVAYSTSLWMLEALLDDVSDEDNYNDDNLGHTGVLDKSDKEVIKRYIDSIANRLKALRRKLSR.

Residues 18–319 (YVVEKEIGRG…FTEFFSNGLV (302 aa)) enclose the Protein kinase domain. ATP-binding positions include 24-32 (IGRGSFAVV) and Lys-48. The active-site Proton acceptor is the Asp-166. Disordered stretches follow at residues 359–394 (KRAS…QSDQ), 424–444 (YNNQ…SNGR), 467–506 (ALQS…HRTT), 562–605 (ASQA…SRRP), and 743–764 (DDEE…NSSG). Basic and acidic residues predominate over residues 424–436 (YNNQEERSNEERQ). The segment covering 562-584 (ASQALQMARHSSTSVSAANTAKQ) has biased composition (polar residues). Positions 585 to 605 (TLLRRNSRTLSSSGASTSRRP) are enriched in low complexity. Over residues 750–759 (EHSPGAETYR) the composition is skewed to basic and acidic residues.

The protein belongs to the protein kinase superfamily. Ser/Thr protein kinase family. APG1/unc-51/ULK1 subfamily. In terms of assembly, homodimer. Forms a ternary complex with ATG13 and ATG17.

Its subcellular location is the cytoplasm. The protein resides in the preautophagosomal structure membrane. It catalyses the reaction L-seryl-[protein] + ATP = O-phospho-L-seryl-[protein] + ADP + H(+). The catalysed reaction is L-threonyl-[protein] + ATP = O-phospho-L-threonyl-[protein] + ADP + H(+). In terms of biological role, serine/threonine protein kinase involved in the cytoplasm to vacuole transport (Cvt) and found to be essential in autophagy, where it is required for the formation of autophagosomes. Involved in the clearance of protein aggregates which cannot be efficiently cleared by the proteasome. Required for selective autophagic degradation of the nucleus (nucleophagy) as well as for mitophagy which contributes to regulate mitochondrial quantity and quality by eliminating the mitochondria to a basal level to fulfill cellular energy requirements and preventing excess ROS production. Also involved in endoplasmic reticulum-specific autophagic process, in selective removal of ER-associated degradation (ERAD) substrates. Plays a key role in ATG9 and ATG23 cycling through the pre-autophagosomal structure and is necessary to promote ATG18 binding to ATG9 through phosphorylation of ATG9. Catalyzes phosphorylation of ATG4, decreasing the interaction between ATG4 and ATG8 and impairing deconjugation of PE-conjugated forms of ATG8. The polypeptide is Serine/threonine-protein kinase ATG1 (Eremothecium gossypii (strain ATCC 10895 / CBS 109.51 / FGSC 9923 / NRRL Y-1056) (Yeast)).